Here is a 257-residue protein sequence, read N- to C-terminus: Protein THYLAKOID ASSEMBLY 8-like, chloroplastic (257 aa).

The N-terminal 55 residues, 1–55 (MTAIRVCSRKFPTFASIFFQNITRNPSIHRISFSNLKPKTLLHPIPPKPFTVFVS), are a transit peptide targeting the chloroplast. PPR repeat units lie at residues 142-176 (DVFM…NLFP) and 177-211 (DSQT…PDPP).

The protein belongs to the PPR family. P subfamily.

The protein resides in the plastid. It localises to the chloroplast. In terms of biological role, binds weakly to specific single strand RNA (ssRNA). The sequence is that of Protein THYLAKOID ASSEMBLY 8-like, chloroplastic from Arabidopsis thaliana (Mouse-ear cress).